The following is a 152-amino-acid chain: Endoribonuclease YbeY (152 aa).

Zn(2+) contacts are provided by H118, H122, and H128.

This sequence belongs to the endoribonuclease YbeY family. Zn(2+) is required as a cofactor.

The protein localises to the cytoplasm. Single strand-specific metallo-endoribonuclease involved in late-stage 70S ribosome quality control and in maturation of the 3' terminus of the 16S rRNA. This chain is Endoribonuclease YbeY, found in Lacticaseibacillus paracasei (strain ATCC 334 / BCRC 17002 / CCUG 31169 / CIP 107868 / KCTC 3260 / NRRL B-441) (Lactobacillus paracasei).